Here is a 495-residue protein sequence, read N- to C-terminus: Bile acid-sensitive ion channel (495 aa).

Residues 1–30 form a binds the plasma membrane and stabilizes the channel in the closed state region; the sequence is MEHTEKSQVHAEKGLLGKIKRYLSKRPLPS. Topologically, residues 1–61 are cytoplasmic; the sequence is MEHTEKSQVH…NIAQNQNKVR (61 aa). Residues 62–82 form a helical membrane-spanning segment; sequence KVIWLAVVLGSVSLLVWQIYS. Residues 83–459 lie on the Extracellular side of the membrane; that stretch reads RLVNYFTWPT…GLFCGASLIT (377 aa). Cystine bridges form between C112-C207, C185-C192, C298-C377, C315-C373, C328-C350, and C330-C342. N-linked (GlcNAc...) asparagine glycans are attached at residues N147, N163, and N179. N370, N405, and N421 each carry an N-linked (GlcNAc...) asparagine glycan. Residues 454 to 456 carry the GAS motif; ion selectivity filter motif; the sequence is GAS. Residues 460–480 form a helical membrane-spanning segment; sequence IIEIIEYFFTNFYWVLIFFLL. Over 481-495 the chain is Cytoplasmic; it reads KILETIQRTSPPQAV.

This sequence belongs to the amiloride-sensitive sodium channel (TC 1.A.6) family. ASIC5 subfamily. As to quaternary structure, forms homotrimeric channels. As to expression, expressed by cholangiocytes (at protein level). Detected in cerebellum, brainstem, kidney, liver, hepatocytes, lung, intestine and embryo. In the cerebellum, restricted to interneurons in the granular layer, specifically in GRM1-expressing unipolar brush cells of the vestibulocerebellum.

The protein resides in the apical cell membrane. The protein localises to the cell membrane. The enzyme catalyses Na(+)(in) = Na(+)(out). It catalyses the reaction Li(+)(in) = Li(+)(out). It carries out the reaction K(+)(in) = K(+)(out). The catalysed reaction is H(+)(in) = H(+)(out). With respect to regulation, inhibited by the diuretic drug amiloride. Contrary to its rat ortholog it is not inhibited by Ca(2+). Functionally, forms bile acid-gated sodium channels and may play a role in bile acid-dependent absorption and secretion by epithelial cells of the bile ducts. Displays high selectivity for sodium ions but can also permit the permeation of other cations. The gating could be indirect and the consequence of alterations of the membrane environment of the channel by bile acids. As a sodium channel of type II unipolar brush cells of the vestibulocerebellum, controlling the electrical activity of these cells, could play a role in motor coordination and balance. The polypeptide is Bile acid-sensitive ion channel (Mus musculus (Mouse)).